The sequence spans 55 residues: Eclosion hormone (55 aa).

It belongs to the insect eclosion hormone family.

It is found in the secreted. Functionally, neuropeptide that triggers the performance of ecdysis behaviors at the end of a molt. It triggers adult behavior patterns: larval, pupal and adult ecdysis, and plasticization during the molt. The sequence is that of Eclosion hormone from Romalea microptera (Eastern lubber grasshopper).